We begin with the raw amino-acid sequence, 917 residues long: Protein translocase subunit SecA 1 (917 aa).

ATP is bound by residues glutamine 87, 105–109 (GEGKT), and aspartate 507. Residues 866-917 (EKSPESIGEDIEGREHPQKHQPFVRQGEKIGRNDPCPCGSGKKYKQCHGKLN) are disordered. 4 residues coordinate Zn(2+): cysteine 901, cysteine 903, cysteine 912, and histidine 913. Residues 907–917 (KKYKQCHGKLN) show a composition bias toward basic residues.

It belongs to the SecA family. In terms of assembly, monomer and homodimer. Part of the essential Sec protein translocation apparatus which comprises SecA, SecYEG and auxiliary proteins SecDF-YajC and YidC. Zn(2+) serves as cofactor.

Its subcellular location is the cell inner membrane. The protein resides in the cytoplasm. The enzyme catalyses ATP + H2O + cellular proteinSide 1 = ADP + phosphate + cellular proteinSide 2.. Part of the Sec protein translocase complex. Interacts with the SecYEG preprotein conducting channel. Has a central role in coupling the hydrolysis of ATP to the transfer of proteins into and across the cell membrane, serving both as a receptor for the preprotein-SecB complex and as an ATP-driven molecular motor driving the stepwise translocation of polypeptide chains across the membrane. The polypeptide is Protein translocase subunit SecA 1 (Nitrosospira multiformis (strain ATCC 25196 / NCIMB 11849 / C 71)).